The sequence spans 178 residues: uncharacterized protein (178 aa).

The next 2 membrane-spanning stretches (helical) occupy residues 6-26 (AIFG…VSGL) and 154-174 (KELV…AMLI).

Its subcellular location is the cell membrane. This is an uncharacterized protein from Methanocaldococcus jannaschii (strain ATCC 43067 / DSM 2661 / JAL-1 / JCM 10045 / NBRC 100440) (Methanococcus jannaschii).